The following is a 1273-amino-acid chain: Kinesin-like protein KIN-14A (1273 aa).

The interval 1–52 (MADQRSKTNRWNWEVSGFEPRKSSSNASFAESTGHRTTGPLLRRNSISTPSL) is disordered. A coiled-coil region spans residues 59–89 (ASKVNGLKEKVKLAKEDYLELRQEATDLQEY). Positions 142–456 (NIKVFCRARP…LNYAARARNT (315 aa)) constitute a Kinesin motor domain. 223–230 (GQTNAGKT) contributes to the ATP binding site. Coiled coils occupy residues 466–511 (IKKW…CVLL), 559–595 (QLDQ…AVRS), and 627–657 (TKKL…RLTE). Disordered stretches follow at residues 827–847 (KPNT…RSPV) and 1136–1157 (QEDT…SISS). The span at 830-846 (TGRSKSTSRGSSPGRSP) shows a compositional bias: low complexity.

It belongs to the TRAFAC class myosin-kinesin ATPase superfamily. Kinesin family. KIN-14 subfamily. As to quaternary structure, homodimer and heterodimer with KCA2. Interacts with CDKA-1. Interacts with AL1, a geminivirus (TGMV) protein essential for viral replication. Interacts with LUE1/KSS. In terms of processing, part of the phosphorylation is not CDK-dependent. Widely expressed.

The protein resides in the nucleus. The protein localises to the cytoplasm. It is found in the cytoskeleton. It localises to the spindle. Its subcellular location is the chromosome. The protein resides in the cell membrane. The protein localises to the phragmoplast. Its function is as follows. Kinesin-like protein required for chloroplast movements and anchor to the plasma membrane. Mediates chloroplast movement via chloroplast actin (cp-actin) filaments. Required for the chloroplast avoidance response under high intensity blue light. Mediates redundantly with CHUP1 the nuclear avoidance response under high intensity blue light. May act as a mitotic kinesin. Probably involved in division plane determination. In Arabidopsis thaliana (Mouse-ear cress), this protein is Kinesin-like protein KIN-14A.